Reading from the N-terminus, the 378-residue chain is MNIWLSMLTTTGLGAIIGGFTNHLAIKMLFRPHRPIYIGKFQVPFTPGLIPKRRDELAVQLGKMVVEHLLTPEGIGKKLTNEEFQKGLIHWAQVEVDKVITNEQSLRHMLGKWDVAHVEKEATEKIEQVITEKIQAFLEEYYTYTWEQALPHSVHEKIENAIPNVSAFILKRAIHFFESEEGKSRLSKMIDDFFASRGALLNLVGMFLGNVSVVDRVQPEVIKFLGQDGTKQLLTDVLQKEWEKLKGRDVKELETFVEKEMIVSSILSAVKVEETVSKFLNQSVQQVCEPVRETIIEKVVPGVVTKGLKWGTENVESILHNLHLAEIVQQEVSTFSTERLEELVLSITKNELKMITYLGALLGGMIGIVQGLLLLFLK.

The next 2 helical transmembrane spans lie at Met-1–Thr-21 and Tyr-357–Leu-377.

Belongs to the UPF0754 family.

Its subcellular location is the cell membrane. The chain is UPF0754 membrane protein BT9727_0767 from Bacillus thuringiensis subsp. konkukian (strain 97-27).